The chain runs to 208 residues: HTLV-1 basic zipper factor (208 aa).

Residues 59–93 are disordered; it reads RLRWGPVGEEAPPRGETHRDRQRRAEEKRKRKRER. The segment covering 69-86 has biased composition (basic and acidic residues); it reads APPRGETHRDRQRRAEEK. 3 consecutive short sequence motifs (nuclear localization signal) follow at residues 86–91, 115–119, and 136–140; these read KRKRKR, RRRRA, and RRERK. Residues 125 to 143 are compositionally biased toward basic and acidic residues; it reads DRARRKLEEEERRERKWRQ. The segment at 125–160 is disordered; the sequence is DRARRKLEEEERRERKWRQTEQGAKQRSARKEKMTE.

The protein belongs to the HTLV-1 HBZ protein family. Interacts with host ATF4; this interaction inhibits viral RNA transcriptional activation by preventing ATF4 binding to Tax-responsive elements. Interacts with host CREB1; this interaction inhibits host CREB1 transcriptional activity. Interacts with host JUN, JUNB and JUND. Interacts with host EP300.

It localises to the host nucleus. Its function is as follows. Contributes to the regulation of viral RNA transcription by interacting with host proteins involved in transcriptional activation such as ATF4, or CREB1, and by inhibiting their activity. Additionally, HBZ suppresses host NF-kappa-B-driven transcription mediated by host RELA as well as transcription of some classical NF-kappa-B target genes, including IL8, IL2RA, IRF4, VCAM1, and VEGFA. This chain is HTLV-1 basic zipper factor (HBZ), found in Human T-cell leukemia virus 1 (isolate Melanesia mel5 subtype C) (HTLV-1).